The following is a 136-amino-acid chain: Putative covalently bound cell wall protein 22 (136 aa).

Residues 1–18 (MQFSTVASIAAIAAVASA) form the signal peptide. Asn-21 and Asn-82 each carry an N-linked (GlcNAc...) asparagine glycan. The interval 73-110 (PLPTTEAPKNTTSPAPTEKPTEKPTEKPTQQGSSTQTV) is disordered. The segment covering 99-110 (KPTQQGSSTQTV) has biased composition (low complexity). A lipid anchor (GPI-anchor amidated glycine) is attached at Gly-115. Positions 116 to 136 (AAVKALPAAGALLAGAAALLL) are cleaved as a propeptide — removed in mature form.

It belongs to the PGA59 family. In terms of processing, the GPI-anchor is attached to the protein in the endoplasmic reticulum and serves to target the protein to the cell surface. There, the glucosamine-inositol phospholipid moiety is cleaved off and the GPI-modified mannoprotein is covalently attached via its lipidless GPI glycan remnant to the 1,6-beta-glucan of the outer cell wall layer.

The protein resides in the secreted. Its subcellular location is the cell wall. It is found in the membrane. In terms of biological role, cell wall protein necessary for cell wall integrity. The protein is Putative covalently bound cell wall protein 22 (CCW22) of Saccharomyces cerevisiae (strain ATCC 204508 / S288c) (Baker's yeast).